Reading from the N-terminus, the 440-residue chain is Chitinase-like protein Idgf5 (440 aa).

Residues 1-27 (MRNKMIYFNFHLFVIIFANLQIFQVQA) form the signal peptide. Positions 28 to 439 (ANIFCYYDTQ…KSIHNAFKKF (412 aa)) constitute a GH18 domain. An intrachain disulfide couples Cys-32 to Cys-56. N-linked (GlcNAc...) asparagine glycans are attached at residues Asn-126, Asn-283, and Asn-403. Cysteines 340 and 421 form a disulfide.

The protein belongs to the glycosyl hydrolase 18 family. IDGF subfamily. Glycosylated.

The protein resides in the secreted. In terms of biological role, cooperates with insulin-like peptides to stimulate the proliferation, polarization and motility of imaginal disk cells. May act by stabilizing the binding of insulin-like peptides to its receptor through a simultaneous interaction with both molecules to form a multiprotein signaling complex. The polypeptide is Chitinase-like protein Idgf5 (Idgf5) (Glossina morsitans morsitans (Savannah tsetse fly)).